A 239-amino-acid polypeptide reads, in one-letter code: MGSGESTTRRVSFGLDEDDRVRILRGVKLSEDVLQRMRNTNADPRPPANNKENQGHQTRTPSTSDAQAPKTQAKTTFPDSKEELKKRYEQQQAIIQEELARIARKEREAARQDISRAVQRERAQTRQESERAKQLGKQLDKKEAELKALEAFYQEQITQLEKKNEERFRMSAEQFHAAATRSEANIKARNVEPVCLNLQAQILNCYRENREQTLQCSDLAKEYMQCINAAKKNLLVNHG.

The N-myristoyl glycine moiety is linked to residue glycine 2. Disordered stretches follow at residues 27-88 (VKLS…KKRY) and 113-133 (DISR…ERAK). The segment covering 50-78 (NKENQGHQTRTPSTSDAQAPKTQAKTTFP) has biased composition (polar residues). Residues 79–88 (DSKEELKKRY) are compositionally biased toward basic and acidic residues. Positions 79–166 (DSKEELKKRY…ITQLEKKNEE (88 aa)) form a coiled coil. Residues 192 to 234 (EPVCLNLQAQILNCYRENREQTLQCSDLAKEYMQCINAAKKNL) enclose the CHCH domain. 2 consecutive short sequence motifs (cx9C motif) follow at residues 195–205 (CLNLQAQILNC) and 216–226 (CSDLAKEYMQC). Cystine bridges form between cysteine 195–cysteine 226 and cysteine 205–cysteine 216.

The protein belongs to the MICOS complex subunit Mic19 family. Metazoan Mic25 subfamily. Component of the mitochondrial contact site and cristae organizing system (MICOS) complex (also known as MINOS or MitOS complex).

The protein resides in the mitochondrion inner membrane. In terms of biological role, component of the MICOS complex, a large protein complex of the mitochondrial inner membrane that plays crucial roles in the maintenance of crista junctions, inner membrane architecture, and formation of contact sites to the outer membrane. This Danio rerio (Zebrafish) protein is MICOS complex subunit mic25a (chchd6a).